The primary structure comprises 335 residues: MQTSHLFTALQQRQQQRDNRYLKGLVVILLLSLLISLCAGDIWLWPTQWFSETGRLFVWQLRLPRALAVLMVGASLAVSGAVMQALFENPLAEPGLLGVANGAGVALVMAVLLGHGLLPIWFLSACAIAGALLMTMLLLGFARRRLLTNARLLLVGVALGIVCSAIMTWAVYFSTSLDLRQLMYWMMGGFSGIDWRHQGLVLALLPIVLWLCCQGHVLNFMSLGEQQAQQLGVSLHLWRNLLVLAIGLLVGVSVALAGVISFIGLVIPHILRLTGLTDQRRLLAGCALAGGGILLLADIVARIALFSAELPIGVVTATLGAPLFIWLLTRVKSVK.

The next 9 helical transmembrane spans lie at 25–45 (LVVI…IWLW), 67–87 (LAVL…QALF), 95–114 (GLLG…VLLG), 118–140 (LPIW…LLLG), 153–173 (LLVG…AVYF), 200–220 (LVLA…VLNF), 243–263 (VLAI…ISFI), 286–306 (CALA…IALF), and 308–328 (AELP…IWLL).

It belongs to the binding-protein-dependent transport system permease family. FecCD subfamily. As to quaternary structure, the complex is composed of two ATP-binding proteins (BtuD), two transmembrane proteins (BtuC) and a solute-binding protein (BtuF).

Its subcellular location is the cell inner membrane. In terms of biological role, part of the ABC transporter complex BtuCDF involved in vitamin B12 import. Involved in the translocation of the substrate across the membrane. This is Vitamin B12 import system permease protein BtuC from Yersinia enterocolitica serotype O:8 / biotype 1B (strain NCTC 13174 / 8081).